We begin with the raw amino-acid sequence, 210 residues long: Synaptosomal-associated protein 25 (210 aa).

Residues 1 to 23 are disordered; sequence MENSVENSMDPRSEQEEMQRCAD. Residues 9-20 show a composition bias toward basic and acidic residues; the sequence is MDPRSEQEEMQR. T-SNARE coiled-coil homology domains lie at 23-85 and 147-209; these read DQIT…LSDL and DARE…ATKM.

Belongs to the SNAP-25 family.

It is found in the synapse. Its subcellular location is the synaptosome. The protein resides in the cell membrane. Its function is as follows. May play an important role in the synaptic function of specific neuronal systems. Associates with proteins involved in vesicle docking and membrane fusion. This is Synaptosomal-associated protein 25 (snap25) from Torpedo marmorata (Marbled electric ray).